Reading from the N-terminus, the 1153-residue chain is Tyrosine-protein kinase JAK1 (1153 aa).

Residues 32–416 enclose the FERM domain; sequence KGLEIHFYLA…GYFRLTVDAH (385 aa). In terms of domain architecture, SH2; atypical spans 435-540; that stretch reads GCHGPICTEY…NLRFQLRRCC (106 aa). 2 Protein kinase domains span residues 580–846 and 872–1150; these read IVQG…DIVM and LKKI…QQML. ATP is bound by residues 878-886 and lysine 905; that span reads LGEGHFGKV. The Proton acceptor role is filled by aspartate 1000. 2 positions are modified to phosphotyrosine; by autocatalysis: tyrosine 1031 and tyrosine 1032.

Belongs to the protein kinase superfamily. Tyr protein kinase family. JAK subfamily. Mg(2+) is required as a cofactor.

It is found in the endomembrane system. It carries out the reaction L-tyrosyl-[protein] + ATP = O-phospho-L-tyrosyl-[protein] + ADP + H(+). Functionally, tyrosine kinase of the non-receptor type, involved in the IFN-alpha/beta/gamma signal pathway. Appears to be required in early development for specific cell migrations (epiboly), expression of homeobox protein goosecoid and formation of anterior structures. The polypeptide is Tyrosine-protein kinase JAK1 (jak1) (Danio rerio (Zebrafish)).